The following is a 180-amino-acid chain: GTP cyclohydrolase 1 (180 aa).

The Zn(2+) site is built by cysteine 71, histidine 74, and cysteine 142.

This sequence belongs to the GTP cyclohydrolase I family. Homomer.

The enzyme catalyses GTP + H2O = 7,8-dihydroneopterin 3'-triphosphate + formate + H(+). It functions in the pathway cofactor biosynthesis; 7,8-dihydroneopterin triphosphate biosynthesis; 7,8-dihydroneopterin triphosphate from GTP: step 1/1. The protein is GTP cyclohydrolase 1 of Helicobacter pylori (strain G27).